Here is a 404-residue protein sequence, read N- to C-terminus: Phosphopentomutase (404 aa).

Residues aspartate 10, aspartate 303, histidine 308, aspartate 344, histidine 345, and histidine 356 each coordinate Mn(2+).

This sequence belongs to the phosphopentomutase family. It depends on Mn(2+) as a cofactor.

The protein localises to the cytoplasm. It catalyses the reaction 2-deoxy-alpha-D-ribose 1-phosphate = 2-deoxy-D-ribose 5-phosphate. The enzyme catalyses alpha-D-ribose 1-phosphate = D-ribose 5-phosphate. Its pathway is carbohydrate degradation; 2-deoxy-D-ribose 1-phosphate degradation; D-glyceraldehyde 3-phosphate and acetaldehyde from 2-deoxy-alpha-D-ribose 1-phosphate: step 1/2. Functionally, isomerase that catalyzes the conversion of deoxy-ribose 1-phosphate (dRib-1-P) and ribose 1-phosphate (Rib-1-P) to deoxy-ribose 5-phosphate (dRib-5-P) and ribose 5-phosphate (Rib-5-P), respectively. This chain is Phosphopentomutase, found in Shewanella sp. (strain ANA-3).